The following is a 175-amino-acid chain: Threonylcarbamoyl-AMP synthase (175 aa).

Positions 1–175 (MLHNDDVIAY…IINGKLIRYV (175 aa)) constitute a YrdC-like domain.

This sequence belongs to the SUA5 family. TsaC subfamily.

The protein localises to the cytoplasm. It carries out the reaction L-threonine + hydrogencarbonate + ATP = L-threonylcarbamoyladenylate + diphosphate + H2O. In terms of biological role, required for the formation of a threonylcarbamoyl group on adenosine at position 37 (t(6)A37) in tRNAs that read codons beginning with adenine. Catalyzes the conversion of L-threonine, HCO(3)(-)/CO(2) and ATP to give threonylcarbamoyl-AMP (TC-AMP) as the acyladenylate intermediate, with the release of diphosphate. This is Threonylcarbamoyl-AMP synthase from Buchnera aphidicola subsp. Acyrthosiphon pisum (strain APS) (Acyrthosiphon pisum symbiotic bacterium).